We begin with the raw amino-acid sequence, 244 residues long: Phosphonates import ATP-binding protein PhnC (244 aa).

An ABC transporter domain is found at 6–244 (IECHNLETAY…LQAQFVVNSQ (239 aa)). 41 to 48 (GLNGAGKS) lines the ATP pocket.

The protein belongs to the ABC transporter superfamily. Phosphonates importer (TC 3.A.1.9.1) family. The complex is composed of two ATP-binding proteins (PhnC), two transmembrane proteins (PhnE) and a solute-binding protein (PhnD).

It localises to the cell inner membrane. It catalyses the reaction phosphonate(out) + ATP + H2O = phosphonate(in) + ADP + phosphate + H(+). In terms of biological role, part of the ABC transporter complex PhnCDE involved in phosphonates import. Responsible for energy coupling to the transport system. The polypeptide is Phosphonates import ATP-binding protein PhnC (Trichormus variabilis (strain ATCC 29413 / PCC 7937) (Anabaena variabilis)).